The chain runs to 277 residues: uncharacterized protein (277 aa).

A disordered region spans residues 232 to 262; that stretch reads NNESAICESQASSKEDERSDKTTSSSKKKSF. The segment covering 234-243 has biased composition (polar residues); sequence ESAICESQAS.

The protein resides in the cytoplasm. It is found in the nucleus. This is an uncharacterized protein from Schizosaccharomyces pombe (strain 972 / ATCC 24843) (Fission yeast).